A 187-amino-acid chain; its full sequence is tRNA (mnm(5)s(2)U34)-methyltransferase (187 aa).

Residues Asn-31, Asn-33, Asp-51, Gln-53, His-77, and Glu-78 each contribute to the S-adenosyl-L-methionine site.

Belongs to the methyltransferase superfamily. MnmM family. Homodimer.

It catalyses the reaction 5-aminomethyl-2-thiouridine(34) in tRNA + S-adenosyl-L-methionine = 5-methylaminomethyl-2-thiouridine(34) in tRNA + S-adenosyl-L-homocysteine + H(+). Its pathway is tRNA modification. Its function is as follows. Involved in the biosynthesis of 5-methylaminomethyl-2-thiouridine (mnm(5)s(2)U) at the wobble position (U34) in tRNA. Catalyzes the transfer of a methyl group from S-adenosyl-L-methionine to nm(5)s(2)U34 to form mnm(5)s(2)U34. This chain is tRNA (mnm(5)s(2)U34)-methyltransferase, found in Staphylococcus aureus (strain NCTC 8325 / PS 47).